The sequence spans 757 residues: Endonuclease MutS2 (757 aa).

321 to 328 (GPNMGGKT) contacts ATP. The Smr domain occupies 681–756 (IDIRGMTVEE…GTGVTVVEVK (76 aa)).

This sequence belongs to the DNA mismatch repair MutS family. MutS2 subfamily. As to quaternary structure, homodimer. Binds to stalled ribosomes, contacting rRNA. Interacts with MutL.

Its activity is regulated as follows. Nuclease activity is stimulated by interaction with MutL and inhibited in the presence of non-hydrolytic ATP (ADPnP). ATPase activity is stimulated by DNA. Endonuclease that is involved in the suppression of homologous recombination and thus may have a key role in the control of bacterial genetic diversity. Has ATPase activity. Binds to DNA. In terms of biological role, acts as a ribosome collision sensor, splitting the ribosome into its 2 subunits. Detects stalled/collided 70S ribosomes which it binds and splits by an ATP-hydrolysis driven conformational change. Acts upstream of the ribosome quality control system (RQC), a ribosome-associated complex that mediates the extraction of incompletely synthesized nascent chains from stalled ribosomes and their subsequent degradation. Probably generates substrates for RQC. This chain is Endonuclease MutS2, found in Thermotoga maritima (strain ATCC 43589 / DSM 3109 / JCM 10099 / NBRC 100826 / MSB8).